A 425-amino-acid polypeptide reads, in one-letter code: Caveolae-associated protein 2 (425 aa).

Positions 1-42 are disordered; the sequence is MGEDAAQAEKFQHPGSDMRQEKPSSPSPMPSSTPSPSLNLGN. N-acetylglycine is present on G2. The segment at 2 to 168 is interaction with CAVIN1; that stretch reads GEDAAQAEKF…IFQEENEIPA (167 aa). Positions 10-22 are enriched in basic and acidic residues; the sequence is KFQHPGSDMRQEK. Residues S27, S35, S37, and S51 each carry the phosphoserine modification. Coiled-coil stretches lie at residues 61–82 and 125–154; these read LLDK…MEQR and TRAV…RRNH. The tract at residues 62–100 is leucine-zipper; sequence LDKLVNMLDAVQENQHKMEQRQISLEGSVKGIQNDLTKL. T196 and T199 each carry phosphothreonine. 2 disordered regions span residues 199 to 234 and 271 to 425; these read TVDL…IKRS and IKKS…HQTS. A phosphoserine mark is found at S203, S204, and S218. Over residues 203–219 the composition is skewed to acidic residues; it reads SSDDDLPHDEEALEDSA. Residues 210–268 adopt a coiled-coil conformation; the sequence is HDEEALEDSAEEKVEESRAEKIKRSSLKKVDSLKKAFSRQNIEKKMNKLGTKIVSVERR. Residues 220–234 show a composition bias toward basic and acidic residues; the sequence is EEKVEESRAEKIKRS. A compositionally biased stretch (polar residues) spans 274 to 287; that stretch reads SLTSNHQKISSGKS. S283, S284, S287, S288, and S293 each carry phosphoserine. Residues 303 to 317 are compositionally biased toward basic and acidic residues; that stretch reads REGESHAENETKSED. S332, S341, S366, and S370 each carry phosphoserine. Phosphothreonine is present on T375. Residues 376–385 are compositionally biased toward acidic residues; sequence IVEDEEEESV. Position 395 is a phosphotyrosine (Y395). Residue S403 is modified to Phosphoserine.

Belongs to the CAVIN family. Component of the CAVIN complex composed of CAVIN1, CAVIN2, CAVIN3 and CAVIN4. Binds to PRKCA in the presence of phosphatidylserine. Interacts with CAVIN4; this augments the transactivation of NPPA by CAVIN4. Interacts with CAVIN1. Interacts with CAV3. In terms of processing, phosphorylated on Ser residues. As to expression, highly expressed in heart and lung, and expressed at lower levels in brain, kidney, liver, pancreas, placenta, and skeletal muscle.

It localises to the cytoplasm. The protein resides in the cytosol. It is found in the membrane. Its subcellular location is the caveola. Its function is as follows. Plays an important role in caveolar biogenesis and morphology. Regulates caveolae morphology by inducing membrane curvature within caveolae. Plays a role in caveola formation in a tissue-specific manner. Required for the formation of caveolae in the lung and fat endothelia but not in the heart endothelia. Negatively regulates the size or stability of CAVIN complexes in the lung endothelial cells. May play a role in targeting PRKCA to caveolae. This is Caveolae-associated protein 2 from Homo sapiens (Human).